The chain runs to 503 residues: UDP-N-acetylmuramate--L-alanine ligase (503 aa).

120–126 (GTHGKTS) is a binding site for ATP.

This sequence belongs to the MurCDEF family.

Its subcellular location is the cytoplasm. It catalyses the reaction UDP-N-acetyl-alpha-D-muramate + L-alanine + ATP = UDP-N-acetyl-alpha-D-muramoyl-L-alanine + ADP + phosphate + H(+). It participates in cell wall biogenesis; peptidoglycan biosynthesis. In terms of biological role, cell wall formation. This chain is UDP-N-acetylmuramate--L-alanine ligase, found in Rhodococcus jostii (strain RHA1).